Consider the following 227-residue polypeptide: Potassium/proton antiporter CemA (227 aa).

Transmembrane regions (helical) follow at residues 5–25 (SISL…SFTF), 112–132 (IICF…LILI), 143–163 (LSDT…IGFH), and 187–207 (IISG…KYWI).

This sequence belongs to the CemA family.

The protein localises to the plastid. It localises to the chloroplast inner membrane. The enzyme catalyses K(+)(in) + H(+)(out) = K(+)(out) + H(+)(in). Its function is as follows. Contributes to K(+)/H(+) antiport activity by supporting proton efflux to control proton extrusion and homeostasis in chloroplasts in a light-dependent manner to modulate photosynthesis. Prevents excessive induction of non-photochemical quenching (NPQ) under continuous-light conditions. Indirectly promotes efficient inorganic carbon uptake into chloroplasts. This Phaseolus vulgaris (Kidney bean) protein is Potassium/proton antiporter CemA.